A 124-amino-acid chain; its full sequence is Con-Ins Tx1 (124 aa).

A signal peptide spans 1 to 24; the sequence is MTTSSYFLLVALGLLLYVFQSSFG. Cystine bridges form between Cys-29–Cys-107, Cys-41–Cys-110, Cys-53–Cys-123, and Cys-109–Cys-114. The residue at position 34 (Pro-34) is a 4-hydroxyproline; partial. Positions 59–92 are cleaved as a propeptide — c peptide; sequence EQGGANNARANTGRTSSLMKRRGFLSLLKKRGKR. A 4-carboxyglutamate; partial modification is found at Glu-118.

Belongs to the insulin family. In terms of assembly, heterodimer of A and B chains; disulfide-linked. Expressed by the venom gland.

It localises to the secreted. This venom insulin facilitates prey capture by rapidly inducing hypoglycemic shock. Intraperitoneal injection of this peptide into zebrafish lowers blood glucose with the same potency than human insulin. In vivo, when applied to water, this peptide reduces overall locomotor activity of zebrafish larvae, observed as a significant decrease in the percentage of time spent swimming and movement frequency. The sequence is that of Con-Ins Tx1 from Conus textile (Cloth-of-gold cone).